A 331-amino-acid polypeptide reads, in one-letter code: Glycerol-3-phosphate dehydrogenase [NAD(P)+] (331 aa).

3 residues coordinate NADPH: W13, R33, and K103. Sn-glycerol 3-phosphate is bound by residues K103, G131, and T133. NADPH is bound at residue A135. Sn-glycerol 3-phosphate contacts are provided by K187, D240, S250, R251, and N252. K187 (proton acceptor) is an active-site residue. R251 lines the NADPH pocket. Residues V275 and E277 each contribute to the NADPH site.

The protein belongs to the NAD-dependent glycerol-3-phosphate dehydrogenase family.

The protein localises to the cytoplasm. It carries out the reaction sn-glycerol 3-phosphate + NAD(+) = dihydroxyacetone phosphate + NADH + H(+). The enzyme catalyses sn-glycerol 3-phosphate + NADP(+) = dihydroxyacetone phosphate + NADPH + H(+). Its pathway is membrane lipid metabolism; glycerophospholipid metabolism. Catalyzes the reduction of the glycolytic intermediate dihydroxyacetone phosphate (DHAP) to sn-glycerol 3-phosphate (G3P), the key precursor for phospholipid synthesis. This chain is Glycerol-3-phosphate dehydrogenase [NAD(P)+], found in Novosphingobium aromaticivorans (strain ATCC 700278 / DSM 12444 / CCUG 56034 / CIP 105152 / NBRC 16084 / F199).